A 682-amino-acid chain; its full sequence is DNA-directed RNA polymerase subunit beta' (682 aa).

The Zn(2+) site is built by C69, C71, C87, and C90. D489, D491, and D493 together coordinate Mg(2+).

The protein belongs to the RNA polymerase beta' chain family. RpoC1 subfamily. In plastids the minimal PEP RNA polymerase catalytic core is composed of four subunits: alpha, beta, beta', and beta''. When a (nuclear-encoded) sigma factor is associated with the core the holoenzyme is formed, which can initiate transcription. It depends on Mg(2+) as a cofactor. Zn(2+) serves as cofactor.

Its subcellular location is the plastid. It is found in the chloroplast. The enzyme catalyses RNA(n) + a ribonucleoside 5'-triphosphate = RNA(n+1) + diphosphate. Its function is as follows. DNA-dependent RNA polymerase catalyzes the transcription of DNA into RNA using the four ribonucleoside triphosphates as substrates. In Hordeum vulgare (Barley), this protein is DNA-directed RNA polymerase subunit beta'.